Consider the following 298-residue polypeptide: Protein REVEILLE 8 (298 aa).

The tract at residues Met1–Glu44 is disordered. The 55-residue stretch at Thr38 to Gln92 folds into the HTH myb-type domain. Residues Trp65–Phe88 constitute a DNA-binding region (H-T-H motif). A disordered region spans residues Thr96–Met123.

The protein resides in the nucleus. Functionally, transcriptional activator of evening element (EE)-containing clock-controlled genes. Forms a negative feedback loop with APRR5. Regulates the pattern of histone H3 acetylation of the TOC1 promoter. RVE4, RVE6 and RVE8 are components of the circadian system acting synergistically to regulate flowering time, redundantly to regulate leaf growth, and antagonistically to regulate hypocotyl elongation; their action seems independent of ZTL and HY5. This is Protein REVEILLE 8 from Arabidopsis thaliana (Mouse-ear cress).